The sequence spans 212 residues: dITP/XTP pyrophosphatase (212 aa).

Residue 7–12 participates in substrate binding; it reads SNNAKK. Residues glutamate 39 and aspartate 68 each contribute to the Mg(2+) site. Residue aspartate 68 is the Proton acceptor of the active site. Substrate contacts are provided by residues serine 69, 165 to 168, lysine 188, and 193 to 194; these read FGYD and HR.

It belongs to the HAM1 NTPase family. In terms of assembly, homodimer. Mg(2+) serves as cofactor.

The catalysed reaction is XTP + H2O = XMP + diphosphate + H(+). The enzyme catalyses dITP + H2O = dIMP + diphosphate + H(+). It catalyses the reaction ITP + H2O = IMP + diphosphate + H(+). Pyrophosphatase that catalyzes the hydrolysis of nucleoside triphosphates to their monophosphate derivatives, with a high preference for the non-canonical purine nucleotides XTP (xanthosine triphosphate), dITP (deoxyinosine triphosphate) and ITP. Seems to function as a house-cleaning enzyme that removes non-canonical purine nucleotides from the nucleotide pool, thus preventing their incorporation into DNA/RNA and avoiding chromosomal lesions. This is dITP/XTP pyrophosphatase from Leptothrix cholodnii (strain ATCC 51168 / LMG 8142 / SP-6) (Leptothrix discophora (strain SP-6)).